Reading from the N-terminus, the 702-residue chain is Cytolytic toxin-beta (702 aa).

The interval 2 to 264 is structural MACPF/CDC pore-forming domain; the sequence is PSDILVVAAL…EAPQLMADSS (263 aa). N-linked (GlcNAc...) asparagine glycosylation is found at N94, N101, and N286. Residues 265 to 387 form a structural FAT domain region; sequence TPILRKVRNT…DIIEEAKHKV (123 aa). Positions 388–515 are thioredoxin (THX) domain; it reads VLSKSQMARE…PRIPPVETIQ (128 aa). In terms of domain architecture, B30.2/SPRY spans 504–702; sequence SNPRIPPVET…ANGQIKLKGE (199 aa).

The protein belongs to the SNTX/VTX toxin family. As to quaternary structure, heterodimer of alpha and beta subunits; non-covalently linked. Also associates into tetramers or even higher aggregates. In terms of processing, intrachain disulfide bonds may be present in the heterodimer. In terms of tissue distribution, expressed by the venom gland.

Its subcellular location is the secreted. Functionally, this heterodimer induces potent hemolytic activities (when tested on rabbit erythrocytes, EC(50)=25-56 ng/mL) due to its ability to form pores in the cell membrane. The pore may be composed of 10 alpha/beta heterodimers. The toxin shows cardiovascular effects that include a vasorelaxant action that may involve the L-arginine-nitric oxid synthase pathway. In addition, it displays edema-inducing activities, increases vascular permeability. It also shows myotoxic activities and interferes irreversibly with neuromuscular function. It also induces irreversible platelet aggregation in rabbit or rat (but not in human or mouse) whole blood. In addition, it has been observed to increase spontaneous quantal acetylcholine release from isolated frog cutaneous pectoris motor endings. The chain is Cytolytic toxin-beta from Scorpaena plumieri (Spotted scorpionfish).